The sequence spans 153 residues: Endoribonuclease YbeY (153 aa).

Zn(2+)-binding residues include His116, His120, and His126.

The protein belongs to the endoribonuclease YbeY family. Zn(2+) serves as cofactor.

It is found in the cytoplasm. Single strand-specific metallo-endoribonuclease involved in late-stage 70S ribosome quality control and in maturation of the 3' terminus of the 16S rRNA. The sequence is that of Endoribonuclease YbeY from Paraburkholderia phymatum (strain DSM 17167 / CIP 108236 / LMG 21445 / STM815) (Burkholderia phymatum).